Reading from the N-terminus, the 201-residue chain is Recombination protein RecR (201 aa).

The segment at 60–75 (CRRCGNVDVCDPCTIC) adopts a C4-type zinc-finger fold. The Toprim domain occupies 83–178 (RTLVVVADVG…RVTRLAQGVP (96 aa)).

The protein belongs to the RecR family.

May play a role in DNA repair. It seems to be involved in an RecBC-independent recombinational process of DNA repair. It may act with RecF and RecO. This Xanthobacter autotrophicus (strain ATCC BAA-1158 / Py2) protein is Recombination protein RecR.